The following is a 116-amino-acid chain: MANEVRVARLESLIKDVINNALANEINDKIAKLARVTAVRLSNDLSVAKIFLDAHKRESMPKVLENVNKVSGLLRSKLAAEWTSYKVPELRFVIDETIDYANHIDELFKKIKQQEN.

Belongs to the RbfA family. In terms of assembly, monomer. Binds 30S ribosomal subunits, but not 50S ribosomal subunits or 70S ribosomes.

The protein localises to the cytoplasm. In terms of biological role, one of several proteins that assist in the late maturation steps of the functional core of the 30S ribosomal subunit. Associates with free 30S ribosomal subunits (but not with 30S subunits that are part of 70S ribosomes or polysomes). Required for efficient processing of 16S rRNA. May interact with the 5'-terminal helix region of 16S rRNA. The polypeptide is Ribosome-binding factor A (Ureaplasma urealyticum serovar 10 (strain ATCC 33699 / Western)).